The following is a 201-amino-acid chain: Recombination protein RecR (201 aa).

A C4-type zinc finger spans residues 57–72 (CADCRTFTEQEVCNIC). Residues 81–176 (GQICVVESPA…EASRIAHGVP (96 aa)) form the Toprim domain.

This sequence belongs to the RecR family.

In terms of biological role, may play a role in DNA repair. It seems to be involved in an RecBC-independent recombinational process of DNA repair. It may act with RecF and RecO. The polypeptide is Recombination protein RecR (Shigella boydii serotype 18 (strain CDC 3083-94 / BS512)).